The sequence spans 472 residues: F420-non-reducing hydrogenase subunit A (472 aa).

Residues cysteine 61, cysteine 64, cysteine 442, and cysteine 445 each coordinate Ni(2+).

The protein belongs to the [NiFe]/[NiFeSe] hydrogenase large subunit family. In terms of assembly, the F420-non-reducing hydrogenase is composed of three subunits; MvhA, MvhD and MvhG. It forms a complex with the heterodisulfide reductase (hdr). Ni(2+) serves as cofactor.

Part of a complex that provides reducing equivalents for heterodisulfide reductase. This Methanothermobacter thermautotrophicus (strain ATCC 29096 / DSM 1053 / JCM 10044 / NBRC 100330 / Delta H) (Methanobacterium thermoautotrophicum) protein is F420-non-reducing hydrogenase subunit A (mvhA).